A 400-amino-acid polypeptide reads, in one-letter code: Phosphoglycerate kinase (400 aa).

Residues 22–24 (DFN), Arg-38, 61–64 (HLGR), Arg-119, and Arg-152 contribute to the substrate site. Residues Lys-205, Gly-296, Glu-327, and 353-356 (GGDT) each bind ATP.

It belongs to the phosphoglycerate kinase family. In terms of assembly, monomer.

It localises to the cytoplasm. The catalysed reaction is (2R)-3-phosphoglycerate + ATP = (2R)-3-phospho-glyceroyl phosphate + ADP. Its pathway is carbohydrate degradation; glycolysis; pyruvate from D-glyceraldehyde 3-phosphate: step 2/5. The sequence is that of Phosphoglycerate kinase from Campylobacter lari (strain RM2100 / D67 / ATCC BAA-1060).